Here is a 209-residue protein sequence, read N- to C-terminus: Ribosomal RNA large subunit methyltransferase E (209 aa).

Residues G63, W65, D83, D99, and D124 each coordinate S-adenosyl-L-methionine. The active-site Proton acceptor is the K164. In terms of domain architecture, TRAM spans 191–209; it reads EASRGRSREVYIVAMGYMG.

It belongs to the class I-like SAM-binding methyltransferase superfamily. RNA methyltransferase RlmE family.

It localises to the cytoplasm. It catalyses the reaction uridine(2552) in 23S rRNA + S-adenosyl-L-methionine = 2'-O-methyluridine(2552) in 23S rRNA + S-adenosyl-L-homocysteine + H(+). Its function is as follows. Specifically methylates the uridine in position 2552 of 23S rRNA at the 2'-O position of the ribose in the fully assembled 50S ribosomal subunit. This Histophilus somni (strain 129Pt) (Haemophilus somnus) protein is Ribosomal RNA large subunit methyltransferase E.